We begin with the raw amino-acid sequence, 209 residues long: Uracil phosphoribosyltransferase (209 aa).

5-phospho-alpha-D-ribose 1-diphosphate-binding positions include Arg79, Arg104, and 131–139 (DPMLATGGS). Uracil-binding positions include Ile194 and 199 to 201 (GDA). Residue Asp200 coordinates 5-phospho-alpha-D-ribose 1-diphosphate.

Belongs to the UPRTase family. Mg(2+) serves as cofactor.

It carries out the reaction UMP + diphosphate = 5-phospho-alpha-D-ribose 1-diphosphate + uracil. The protein operates within pyrimidine metabolism; UMP biosynthesis via salvage pathway; UMP from uracil: step 1/1. With respect to regulation, allosterically activated by GTP. Catalyzes the conversion of uracil and 5-phospho-alpha-D-ribose 1-diphosphate (PRPP) to UMP and diphosphate. This chain is Uracil phosphoribosyltransferase, found in Geobacillus sp. (strain WCH70).